The sequence spans 888 residues: Probable disease resistance protein At5g63020 (888 aa).

Residues 22–66 (LNRNGDYIHGLEENLTALQRALEQIEQRREDLLRKILSEERRGLQ) are a coiled coil. The region spanning 139 to 442 (AERVDAARVE…GEGFIDRNKG (304 aa)) is the NB-ARC domain. 181–188 (GMGGVGKT) serves as a coordination point for ATP. 5 LRR repeats span residues 512 to 533 (VARRVSLMFNNIESIRDAPESP), 534 to 555 (QLITLLLRKNFLGHISSSFFRL), 558 to 580 (MLVVLDLSMNRDLRHLPNEISEC), 582 to 604 (SLQYLSLSRTRIRIWPAGLVELR), and 605 to 627 (KLLYLNLEYTRMVESICGISGLT).

It belongs to the disease resistance NB-LRR family.

Functionally, probable disease resistance protein. This chain is Probable disease resistance protein At5g63020, found in Arabidopsis thaliana (Mouse-ear cress).